The chain runs to 123 residues: Loki profilin-3 (123 aa).

This sequence belongs to the Asgard profilin family.

The protein localises to the cytoplasm. It is found in the cytoskeleton. Functionally, binds to actin and affects the structure of the cytoskeleton. At high concentrations inhibits spontaneous rabbit actin nucleation. This strongly suggests this archaea has a profilin-regulated actin system, and actin-type genes can be identified in this organism. The sequence is that of Loki profilin-3 from Lokiarchaeum sp. (strain GC14_75).